Consider the following 61-residue polypeptide: Photosystem II reaction center protein K (61 aa).

A propeptide spanning residues Met1–Gly24 is cleaved from the precursor. A helical transmembrane segment spans residues Ile36–Ala56.

Belongs to the PsbK family. PSII is composed of 1 copy each of membrane proteins PsbA, PsbB, PsbC, PsbD, PsbE, PsbF, PsbH, PsbI, PsbJ, PsbK, PsbL, PsbM, PsbT, PsbX, PsbY, PsbZ, Psb30/Ycf12, at least 3 peripheral proteins of the oxygen-evolving complex and a large number of cofactors. It forms dimeric complexes.

Its subcellular location is the plastid. The protein resides in the chloroplast thylakoid membrane. In terms of biological role, one of the components of the core complex of photosystem II (PSII). PSII is a light-driven water:plastoquinone oxidoreductase that uses light energy to abstract electrons from H(2)O, generating O(2) and a proton gradient subsequently used for ATP formation. It consists of a core antenna complex that captures photons, and an electron transfer chain that converts photonic excitation into a charge separation. This chain is Photosystem II reaction center protein K, found in Nicotiana tomentosiformis (Tobacco).